The following is a 316-amino-acid chain: DNA-directed RNA polymerase III subunit RPC6 (316 aa).

At A2 the chain carries N-acetylalanine. Residues K5 and K7 each participate in a glycyl lysine isopeptide (Lys-Gly) (interchain with G-Cter in SUMO2) cross-link. The [4Fe-4S] cluster site is built by C287, C290, C296, and C307.

This sequence belongs to the eukaryotic RPC34/RPC39 RNA polymerase subunit family. As to quaternary structure, component of the RNA polymerase III complex consisting of 17 subunits: a ten-subunit horseshoe-shaped catalytic core composed of POLR3A/RPC1, POLR3B/RPC2, POLR1C/RPAC1, POLR1D/RPAC2, POLR3K/RPC10, POLR2E/RPABC1, POLR2F/RPABC2, POLR2H/RPABC3, POLR2K/RPABC4 and POLR2L/RPABC5; a mobile stalk composed of two subunits POLR3H/RPC8 and CRCP/RPC9, protruding from the core and functioning primarily in transcription initiation; and additional subunits homologous to general transcription factors of the RNA polymerase II machinery, POLR3C/RPC3-POLR3F/RPC6-POLR3G/RPC7 heterotrimer required for transcription initiation and POLR3D/RPC4-POLR3E/RPC5 heterodimer involved in both transcription initiation and termination. Directly interacts with POLR3C. Interacts with TBP and TFIIIB90 and GTF3C4. Interacts with MAF1. As part of the RNA polymerase III complex, interacts with PKP2.

It is found in the nucleus. In terms of biological role, DNA-dependent RNA polymerase catalyzes the transcription of DNA into RNA using the four ribonucleoside triphosphates as substrates. Specific peripheric component of RNA polymerase III (Pol III) which synthesizes small non-coding RNAs including 5S rRNA, snRNAs, tRNAs and miRNAs from at least 500 distinct genomic loci. Part of POLR3C/RPC3-POLR3F/RPC6-POLR3G/RPC7 heterotrimer that coordinates the dynamics of Pol III stalk and clamp modules during the transition from apo to elongation state. Pol III plays a key role in sensing and limiting infection by intracellular bacteria and DNA viruses, including varicella zoster virus. Acts as a nuclear and cytosolic DNA sensor detecting AT-rich DNA, involved in innate immune response. Can sense non-self dsDNA that serves as template for transcription into dsRNA. The non-self RNA polymerase III transcripts, such as Epstein-Barr virus-encoded RNAs (EBERs) induce type I interferon and NF-kappa-B through the RIG-I pathway. Preferentially binds double-stranded DNA (dsDNA). The sequence is that of DNA-directed RNA polymerase III subunit RPC6 (POLR3F) from Bos taurus (Bovine).